The primary structure comprises 239 residues: Major centromere autoantigen B (239 aa).

Residues 28 to 185 (AGFGGGPNAT…DDEVPVPSFG (158 aa)) form a disordered region. A phosphothreonine mark is found at T37 and T39. Composition is skewed to acidic residues over residues 46–117 (GEEE…EAED) and 148–179 (GEEDSESDSEEEEEDDDEDEDDEDDEEEDDEV). Positions 176–239 (DDEVPVPSFG…AGARGLGHQS (64 aa)) are homodimerization.

As to quaternary structure, antiparallel homodimer. Interacts with CENPT. Identified in a centromere complex containing histones H2A, H2B and H4, and at least CENPA, CENPB, CENPC, CENPT, CENPN, HJURP, SUPT16H, SSRP1 and RSF1. Poly-ADP-ribosylated by PARP1. Post-translationally, N-terminally methylated by METTL11A/NTM1. Alpha-N-methylation is stimulated in response extracellular stimuli, including increased cell density and heat shock, and seems to facilitate binding to CENP-B boxes. Chromatin-bound CENP-B is primarily trimethylated.

Its subcellular location is the nucleus. It localises to the chromosome. It is found in the centromere. Its function is as follows. Interacts with centromeric heterochromatin in chromosomes and binds to a specific 17 bp subset of alphoid satellite DNA, called the CENP-B box. May organize arrays of centromere satellite DNA into a higher-order structure which then directs centromere formation and kinetochore assembly in mammalian chromosomes. The sequence is that of Major centromere autoantigen B (CENPB) from Ovis aries (Sheep).